A 592-amino-acid chain; its full sequence is Aspartate--tRNA(Asp/Asn) ligase (592 aa).

L-aspartate is bound at residue Glu-177. The aspartate stretch occupies residues 201-204; sequence QIFK. The L-aspartate site is built by Arg-223 and His-452. 223-225 is a binding site for ATP; that stretch reads RDE. Residue Glu-486 coordinates ATP. Arg-493 serves as a coordination point for L-aspartate. 538 to 541 serves as a coordination point for ATP; it reads GIDR.

It belongs to the class-II aminoacyl-tRNA synthetase family. Type 1 subfamily. Homodimer.

It localises to the cytoplasm. It catalyses the reaction tRNA(Asx) + L-aspartate + ATP = L-aspartyl-tRNA(Asx) + AMP + diphosphate. Functionally, aspartyl-tRNA synthetase with relaxed tRNA specificity since it is able to aspartylate not only its cognate tRNA(Asp) but also tRNA(Asn). Reaction proceeds in two steps: L-aspartate is first activated by ATP to form Asp-AMP and then transferred to the acceptor end of tRNA(Asp/Asn). This is Aspartate--tRNA(Asp/Asn) ligase from Anaplasma marginale (strain Florida).